Consider the following 116-residue polypeptide: Calcium-regulated OB-fold protein CarO (116 aa).

The signal sequence occupies residues 1–21 (MKLRHLPLIAAIGLFSTVTLA).

The protein resides in the periplasm. Plays a role in intracellular Ca(2+) homeostasis. Involved in cell protection against oxidative stress in strain 25W. This chain is Calcium-regulated OB-fold protein CarO, found in Pseudomonas aeruginosa (strain ATCC 15692 / DSM 22644 / CIP 104116 / JCM 14847 / LMG 12228 / 1C / PRS 101 / PAO1).